Here is a 343-residue protein sequence, read N- to C-terminus: Selenide, water dikinase (343 aa).

Selenocysteine 16 is a catalytic residue. Residue selenocysteine 16 is a non-standard amino acid, selenocysteine. ATP is bound by residues lysine 19 and 46–48; that span reads GAE. Aspartate 49 is a Mg(2+) binding site. Residues aspartate 66, aspartate 89, and 137–139 each bind ATP; that span reads GHT. Aspartate 89 contacts Mg(2+). Residue aspartate 225 participates in Mg(2+) binding.

It belongs to the selenophosphate synthase 1 family. Class I subfamily. In terms of assembly, homodimer. Mg(2+) is required as a cofactor.

The catalysed reaction is hydrogenselenide + ATP + H2O = selenophosphate + AMP + phosphate + 2 H(+). Its function is as follows. Synthesizes selenophosphate from selenide and ATP. The protein is Selenide, water dikinase of Geobacter sp. (strain M21).